Here is a 72-residue protein sequence, read N- to C-terminus: UPF0352 protein swp_2271 (72 aa).

It belongs to the UPF0352 family.

The chain is UPF0352 protein swp_2271 from Shewanella piezotolerans (strain WP3 / JCM 13877).